Reading from the N-terminus, the 521-residue chain is MSL complex subunit 3 (521 aa).

Residues 13–71 (SGEKVLCFEPDPTKARVLYDAKIVDVIVGKDEKGRKIPEYLIHFNGWNRSWDRWAAEDH) form the Tudor-knot domain. Disordered stretches follow at residues 114-166 (KGLP…TRRE) and 298-409 (ATST…PSKE). Positions 139–149 (KDEEISEESDI) are enriched in acidic residues. A compositionally biased stretch (basic and acidic residues) spans 150–166 (EEKTEVKEEPELQTRRE). One can recognise an MRG domain in the interval 168-517 (EERTITIEIP…CEAHYSTKNP (350 aa)). The required for the histone acetyltransferase activity of the MSL complex stretch occupies residues 290-440 (FFLPIKESAT…WKLVPDNYPP (151 aa)). Ser309 and Ser311 each carry phosphoserine. The segment covering 316–329 (NPSTPQSTESQPTT) has biased composition (low complexity). Ser367 and Ser400 each carry phosphoserine. Residue Thr405 is modified to Phosphothreonine. 2 positions are modified to phosphoserine: Ser407 and Ser411.

As to quaternary structure, component of the MSL histone acetyltransferase complex at least composed of the KAT8/MOF, MSL1/hampin, MSL2 and MSL3. Interacts (via the MRG domain) with MSL1 and KAT8/MOF. In terms of tissue distribution, expressed in many tissues including liver, pancreas, heart, lung, kidney, skeletal muscle, brain, and placenta, with highest expression in skeletal muscle and heart.

Its subcellular location is the nucleus. In terms of biological role, non-catalytic component of the MSL histone acetyltransferase complex, a multiprotein complex that mediates the majority of histone H4 acetylation at 'Lys-16' (H4K16ac), an epigenetic mark that prevents chromatin compaction. The MSL complex is required for chromosome stability and genome integrity by maintaining homeostatic levels of H4K16ac. The MSL complex is also involved in gene dosage by promoting up-regulation of genes expressed by the X chromosome. X up-regulation is required to compensate for autosomal biallelic expression. The MSL complex also participates in gene dosage compensation by promoting expression of Tsix non-coding RNA. Acts as a histone reader that specifically recognizes and binds histone H4 monomethylated at 'Lys-20' (H4K20Me1) in a DNA-dependent manner and is proposed to be involved in chromosomal targeting of the MSL complex. May play a role X inactivation in females. In Homo sapiens (Human), this protein is MSL complex subunit 3.